A 190-amino-acid polypeptide reads, in one-letter code: MESMVNDPTVAMFASLFVALVLAAAAIPKLRSQDEFLGVVANYKLLPGFLVAPFAKLLPWLELGCAIALLVPSLRVLAACVAAALFMLFSFAIAVNVGRGRTHIDCGCVRRPTSMSRIGMFHVLRALALAGMSLYVAAVPLEISGISIESALTALASAVMLSLIYMAADLMVGFPATKHKLEIYKGNSND.

The next 5 helical transmembrane spans lie at 8-28 (PTVA…AAIP), 49-69 (FLVA…AIAL), 77-97 (LAAC…AVNV), 126-146 (ALAL…ISGI), and 154-174 (ALAS…MVGF).

Its subcellular location is the cell membrane. It participates in one-carbon metabolism; methylamine degradation. In terms of biological role, may be specifically involved in the processing, transport, and/or maturation of the MADH beta-subunit. This chain is Methylamine utilization protein MauE (mauE), found in Methylophilus methylotrophus (Bacterium W3A1).